Reading from the N-terminus, the 300-residue chain is UDP-N-acetylenolpyruvoylglucosamine reductase (300 aa).

In terms of domain architecture, FAD-binding PCMH-type spans 30–194 (RVGGPADFFV…IGATFVLDSD (165 aa)). Arginine 174 is an active-site residue. The active-site Proton donor is serine 223. Glutamate 293 is an active-site residue.

This sequence belongs to the MurB family. Requires FAD as cofactor.

The protein resides in the cytoplasm. It carries out the reaction UDP-N-acetyl-alpha-D-muramate + NADP(+) = UDP-N-acetyl-3-O-(1-carboxyvinyl)-alpha-D-glucosamine + NADPH + H(+). It participates in cell wall biogenesis; peptidoglycan biosynthesis. Functionally, cell wall formation. This is UDP-N-acetylenolpyruvoylglucosamine reductase from Geobacter sulfurreducens (strain ATCC 51573 / DSM 12127 / PCA).